The primary structure comprises 944 residues: MDEASHLPNGSLKNMEFTPVGFIKSKRNTTQTQVVSPTKVPNANNGDENEGPVKKRQRRSIDDTIDSTRLFSEASQFDDSFPEIKANIPPSPRSGNVDKSRKRNLIDDLKKDVPMSQPLKEQEVREHQMKKERFDRALESKLLGKRHITYANSDISNKELYINEIKSLKHEIKELRKEKNDTLNNYDTLEEETDDLKNRLQALEKELDAKNKIVNSRKVDDHSGCIEEREQMERKLAELERKLKTVKDQVLELENNSDVQSLKLRSKEDELKNLMNELNELKSNAEEKDTQLEFKKNELRKRTIELNELKIKSDEMDLQLKQKQNESKRLKDELNELETKFSENGSQSSAKENELKMLKNKIAELEEEISTKNSQLIAKEGKLASLMAQLTQLESKLNQRDSQLGSREEELKKTNDKLQKDIRIAREETVSKDERITDLQKKVKQLENDLFVIKKTHSESKTITDNELESKDKLIKILENDLKVAQEKYSKMEKELKEREFNYKISESKLEDEKTTLNEKISNLAAENSQLKNKIEDNSTATHHMKENYEKQLESLRKDIEEYKESAKDSEDKIEELKIRIAENSAKVSEKRSKDIKQKDEQISDLTQNLKLQEDEISSLKSIIDRYKKDFNQLKSEQSNIQHDLNLQILNLENKLIESEDELKSLRDSQKIEIENWKRKYNNLSLENDRLLTEKESASDKEREISILNRKLDEMDKEKWNLQESKEKYKRELQKVITANDRLRREKEELNENSNNIRIMEDKMTRIKKNYLSEITSLQEENRRLEERLILNERRKDNDSTMQLNDIISYYKLKYHSEVRHNNDLKVINDYLNKVLALGTRRLRLDTRKGEHSLNISLPDDDELDRDYYNSHVYTRYHDYEYPLRFNLNRRGPYFERRLSFKTVALLVLACVRMKRIAFYRRSDDNRLRILRDRIESSSGRISW.

Position 18 is a phosphothreonine (threonine 18). Residues isoleucine 23 to lysine 110 are disordered. A compositionally biased stretch (polar residues) spans asparagine 28–glycine 46. Residues lysine 54–arginine 59 carry the Nuclear localization signal motif. Position 60 is a phosphoserine; by MPS1 (serine 60). Residues threonine 64 and threonine 68 each carry the phosphothreonine; by MPS1 modification. The span at serine 67 to aspartate 78 shows a compositional bias: polar residues. Serine 80 carries the post-translational modification Phosphoserine. Positions asparagine 96 to lysine 110 are enriched in basic and acidic residues. A coiled-coil region spans residues leucine 119–aspartate 799. Residue serine 529 is modified to Phosphoserine. 2 consecutive short sequence motifs (nuclear localization signal) follow at residues lysine 726–arginine 731 and arginine 742–lysine 747. Positions serine 900–arginine 927 are calmodulin-binding.

It belongs to the SPC110 family. As to quaternary structure, homodimer. Component of the SPC110 complex containing at least CMD1, SPC29 and SCP110. Interacts with SPC97 and SPC98.

The protein resides in the nucleus. It localises to the cytoplasm. Its subcellular location is the cytoskeleton. It is found in the microtubule organizing center. The protein localises to the spindle pole body. Its function is as follows. Component of the spindle pole body (SPB) required for the proper execution of spindle pole body (SPB) duplication. Potential role in cross-linking filaments or anchoring other molecules. It is essential for growth. The chain is Spindle pole body component 110 (SPC110) from Saccharomyces cerevisiae (strain Lalvin EC1118 / Prise de mousse) (Baker's yeast).